The following is an 807-amino-acid chain: Phenylalanine--tRNA ligase beta subunit (807 aa).

Positions 39-153 constitute a tRNA-binding domain; the sequence is SARAQGVVVG…SLPPNGSPVA (115 aa). Residues 407-491 form the B5 domain; it reads AEAGPVLLRR…RLVGFDRFGA (85 aa). Residues D469, D475, E478, and E479 each coordinate Mg(2+). One can recognise an FDX-ACB domain in the interval 713–806; that stretch reads PTVPFSERDL…LSKQFQAELR (94 aa).

Belongs to the phenylalanyl-tRNA synthetase beta subunit family. Type 1 subfamily. As to quaternary structure, tetramer of two alpha and two beta subunits. The cofactor is Mg(2+).

The protein localises to the cytoplasm. It catalyses the reaction tRNA(Phe) + L-phenylalanine + ATP = L-phenylalanyl-tRNA(Phe) + AMP + diphosphate + H(+). This is Phenylalanine--tRNA ligase beta subunit from Synechococcus sp. (strain CC9605).